Reading from the N-terminus, the 294-residue chain is Elongation factor Ts (294 aa).

Residues 81–84 (TDFV) form an involved in Mg(2+) ion dislocation from EF-Tu region.

It belongs to the EF-Ts family.

The protein resides in the cytoplasm. In terms of biological role, associates with the EF-Tu.GDP complex and induces the exchange of GDP to GTP. It remains bound to the aminoacyl-tRNA.EF-Tu.GTP complex up to the GTP hydrolysis stage on the ribosome. This Levilactobacillus brevis (strain ATCC 367 / BCRC 12310 / CIP 105137 / JCM 1170 / LMG 11437 / NCIMB 947 / NCTC 947) (Lactobacillus brevis) protein is Elongation factor Ts.